The sequence spans 545 residues: Chaperonin GroEL (545 aa).

ATP contacts are provided by residues 30 to 33 (TLGP), Lys-51, 87 to 91 (DGTTT), Gly-415, 483 to 485 (NAA), and Asp-499.

This sequence belongs to the chaperonin (HSP60) family. As to quaternary structure, forms a cylinder of 14 subunits composed of two heptameric rings stacked back-to-back. Interacts with the co-chaperonin GroES.

It localises to the cytoplasm. It catalyses the reaction ATP + H2O + a folded polypeptide = ADP + phosphate + an unfolded polypeptide.. Its function is as follows. Together with its co-chaperonin GroES, plays an essential role in assisting protein folding. The GroEL-GroES system forms a nano-cage that allows encapsulation of the non-native substrate proteins and provides a physical environment optimized to promote and accelerate protein folding. This Aquifex aeolicus (strain VF5) protein is Chaperonin GroEL.